A 387-amino-acid chain; its full sequence is Galactokinase (387 aa).

Residue 33–36 (EHTD) coordinates substrate. ATP-binding positions include S67 and 124 to 130 (GAGLSSS). Residues S130 and E162 each coordinate Mg(2+). D174 (proton acceptor) is an active-site residue. Substrate is bound at residue Y224.

Belongs to the GHMP kinase family. GalK subfamily.

It is found in the cytoplasm. The enzyme catalyses alpha-D-galactose + ATP = alpha-D-galactose 1-phosphate + ADP + H(+). It functions in the pathway carbohydrate metabolism; galactose metabolism. In terms of biological role, catalyzes the transfer of the gamma-phosphate of ATP to D-galactose to form alpha-D-galactose-1-phosphate (Gal-1-P). This chain is Galactokinase, found in Lactiplantibacillus plantarum (strain ATCC BAA-793 / NCIMB 8826 / WCFS1) (Lactobacillus plantarum).